The following is a 377-amino-acid chain: Nucleosome assembly protein 1;2 (377 aa).

Positions 26–80 form a coiled coil; it reads VNVLKNKLHDLTGKHSNVTESLSPNVRKRVEALREIQTEHDELEAKFFEERAALE. The short motif at 47–62 is the Nuclear export signal element; sequence LSPNVRKRVEALREIQ. Residues 223–228 carry the Nuclear localization signal motif; it reads KKKPKK. The disordered stretch occupies residues 298 to 377; sequence EAAEDDYAEL…GERPPECKQQ (80 aa). Over residues 299–342 the composition is skewed to acidic residues; it reads AAEDDYAELEDDEDEDDDEEDDEDEDEEEEDEEDDEDEEEDEDE. Cys374 bears the Cysteine methyl ester mark. Cys374 is lipidated: S-farnesyl cysteine. The propeptide at 375–377 is removed in mature form; that stretch reads KQQ.

This sequence belongs to the nucleosome assembly protein (NAP) family. In terms of assembly, binds preferentially histone H1 in vitro. Interacts with CYCB1;1.

Its subcellular location is the nucleus. It is found in the cytoplasm. Functionally, may modulate chromatin structure by regulation of nucleosome assembly/disassembly. Could function together with B-type cyclins in the regulation of microtubule dynamics. The polypeptide is Nucleosome assembly protein 1;2 (NAP1;2) (Nicotiana tabacum (Common tobacco)).